We begin with the raw amino-acid sequence, 855 residues long: Inactive rhomboid protein 1 (855 aa).

The disordered stretch occupies residues 1-36 (MSEARRDSTSSLQRKKPPWLKLDIPSAAPPAAEEPS). The Cytoplasmic segment spans residues 1-411 (MSEARRDSTS…HRPFFTYWLT (411 aa)). Residues 25-36 (PSAAPPAAEEPS) show a composition bias toward low complexity. Phosphoserine is present on residues Ser-76 and Ser-176. Residues Thr-180 and Thr-183 each carry the phosphothreonine modification. Ser-390 carries the post-translational modification Phosphoserine. The helical transmembrane segment at 412 to 432 (FVHSLVTVLAVCIYGIAPVGF) threads the bilayer. Over 433 to 655 (SQHETVDSVL…NPEVPDQFYR (223 aa)) the chain is Lumenal. Residue Asn-583 is glycosylated (N-linked (GlcNAc...) asparagine). Residues 656 to 676 (LWLSLFLHAGILHCLVSICFQ) form a helical membrane-spanning segment. Topologically, residues 677 to 691 (MTVLRDLEKLAGWHR) are cytoplasmic. A helical transmembrane segment spans residues 692-712 (IAIIYLLSGVTGNLASAIFLP). Topologically, residues 713–714 (YR) are lumenal. The chain crosses the membrane as a helical span at residues 715–735 (AEVGPAGSQFGILACLFVELF). Over 736–746 (QSWQILARPWR) the chain is Cytoplasmic. The helical transmembrane segment at 747–767 (AFFKLLAVVLFLFTFGLLPWI) threads the bilayer. Topologically, residues 768-772 (DNFAH) are lumenal. A helical membrane pass occupies residues 773–793 (ISGFISGLFLSFAFLPYISFG). Over 794–803 (KFDLYRKRCQ) the chain is Cytoplasmic. Residues 804-824 (IIVFQVVFLGLLAGLVVLFYF) form a helical membrane-spanning segment. Over 825-855 (YPVRCEWCEFLTCIPFTDKFCEKYELDAQLH) the chain is Lumenal.

This sequence belongs to the peptidase S54 family. Homodimer, or homooligomer. Interacts with TGFA and HBEGF. Interacts with EGF; may retain EGF in the endoplasmic reticulum and regulates its degradation through the endoplasmic reticulum-associated degradation (ERAD). Interacts (via cytoplasmic N-terminus) with FRMD8/iTAP; this interaction leads to mutual protein stabilization. Interacts with ADAM17/TACE.

Its subcellular location is the endoplasmic reticulum membrane. The protein resides in the golgi apparatus membrane. Its function is as follows. Regulates ADAM17 protease, a sheddase of the epidermal growth factor (EGF) receptor ligands and TNF, thereby plays a role in sleep, cell survival, proliferation, migration and inflammation. Does not exhibit any protease activity on its own. This chain is Inactive rhomboid protein 1 (RHBDF1), found in Plecturocebus moloch (Dusky titi monkey).